Here is a 517-residue protein sequence, read N- to C-terminus: BTB/POZ domain-containing protein At3g49900 (517 aa).

Residues 28–37 are compositionally biased toward low complexity; sequence SSSSSSLSLS. Residues 28 to 49 form a disordered region; sequence SSSSSSLSLSPKQPINLSSSPS. A compositionally biased stretch (polar residues) spans 38–49; sequence PKQPINLSSSPS. In terms of domain architecture, BTB spans 67-130; sequence PDVFVNVGGT…CYGAHIELTP (64 aa). The region spanning 224-307 is the NPH3 domain; it reads LPAGDFNVVA…VRAMLQEQLN (84 aa). Positions 409 to 456 are disordered; the sequence is ARSASFHCVHQPSNVNKTQRGDRGSVSNLSTTYRRRRASPPQAQPQKS.

It belongs to the NPH3 family.

It functions in the pathway protein modification; protein ubiquitination. May act as a substrate-specific adapter of an E3 ubiquitin-protein ligase complex (CUL3-RBX1-BTB) which mediates the ubiquitination and subsequent proteasomal degradation of target proteins. This is BTB/POZ domain-containing protein At3g49900 from Arabidopsis thaliana (Mouse-ear cress).